The primary structure comprises 303 residues: NAD kinase (303 aa).

Asp85 (proton acceptor) is an active-site residue. Residues 85 to 86, 159 to 160, Arg187, Asp189, 200 to 205, Ala224, and Gln258 each bind NAD(+); these read DG, ND, and TAYALS.

Belongs to the NAD kinase family. It depends on a divalent metal cation as a cofactor.

Its subcellular location is the cytoplasm. It catalyses the reaction NAD(+) + ATP = ADP + NADP(+) + H(+). Functionally, involved in the regulation of the intracellular balance of NAD and NADP, and is a key enzyme in the biosynthesis of NADP. Catalyzes specifically the phosphorylation on 2'-hydroxyl of the adenosine moiety of NAD to yield NADP. The sequence is that of NAD kinase from Variovorax paradoxus (strain S110).